The sequence spans 570 residues: Endo-1,4-beta-xylanase 5-like (570 aa).

The N-terminal stretch at methionine 1–glycine 23 is a signal peptide. 3 N-linked (GlcNAc...) asparagine glycosylation sites follow: asparagine 197, asparagine 261, and asparagine 307. A GH10 domain is found at lysine 202–leucine 501. The active-site Proton donor is glutamate 332. Asparagine 346 carries an N-linked (GlcNAc...) asparagine glycan. Glutamate 439 functions as the Nucleophile in the catalytic mechanism. N-linked (GlcNAc...) asparagine glycans are attached at residues asparagine 490, asparagine 515, asparagine 537, and asparagine 545.

It belongs to the glycosyl hydrolase 10 (cellulase F) family.

The catalysed reaction is Endohydrolysis of (1-&gt;4)-beta-D-xylosidic linkages in xylans.. It functions in the pathway glycan degradation; xylan degradation. In terms of biological role, binds to and hydrolyzes insoluble and soluble xylan substrates. The protein is Endo-1,4-beta-xylanase 5-like of Arabidopsis thaliana (Mouse-ear cress).